The chain runs to 474 residues: 3-isopropylmalate dehydratase large subunit (474 aa).

Cysteine 352, cysteine 413, and cysteine 416 together coordinate [4Fe-4S] cluster.

Belongs to the aconitase/IPM isomerase family. LeuC type 1 subfamily. Heterodimer of LeuC and LeuD. [4Fe-4S] cluster serves as cofactor.

It carries out the reaction (2R,3S)-3-isopropylmalate = (2S)-2-isopropylmalate. Its pathway is amino-acid biosynthesis; L-leucine biosynthesis; L-leucine from 3-methyl-2-oxobutanoate: step 2/4. Functionally, catalyzes the isomerization between 2-isopropylmalate and 3-isopropylmalate, via the formation of 2-isopropylmaleate. In Pseudomonas syringae pv. syringae (strain B728a), this protein is 3-isopropylmalate dehydratase large subunit.